The primary structure comprises 30 residues: Sillucin (30 aa).

4 cysteine pairs are disulfide-bonded: C2/C7, C12/C24, C13/C30, and C14/C21.

It is found in the secreted. Its function is as follows. Sillucin is an antimicrobial agent produced by the thermophilic fungus Rhizomucor pusillus in liquid culture; it is effective against Gram-positive bacteria at the level of RNA metabolism. This chain is Sillucin, found in Rhizomucor pusillus.